The chain runs to 147 residues: Ras-related protein RabK2 (147 aa).

GTP contacts are provided by residues 11–15 (NTHGS) and 63–66 (TKSD). Cysteine 145 carries S-geranylgeranyl cysteine lipidation.

It belongs to the small GTPase superfamily. Rab family.

The protein resides in the cell membrane. This is Ras-related protein RabK2 (rabK2) from Dictyostelium discoideum (Social amoeba).